Reading from the N-terminus, the 172-residue chain is Shikimate kinase 2 (172 aa).

Residue 9 to 16 (GARAAGKT) participates in ATP binding.

The protein belongs to the shikimate kinase family.

It is found in the cytoplasm. The catalysed reaction is shikimate + ATP = 3-phosphoshikimate + ADP + H(+). It participates in metabolic intermediate biosynthesis; chorismate biosynthesis; chorismate from D-erythrose 4-phosphate and phosphoenolpyruvate: step 5/7. The protein is Shikimate kinase 2 of Syntrophotalea carbinolica (strain DSM 2380 / NBRC 103641 / GraBd1) (Pelobacter carbinolicus).